The chain runs to 234 residues: HTH-type transcriptional regulator MT1864 (234 aa).

Residues 15 to 75 enclose the HTH tetR-type domain; that stretch reads EQIEAKIVEL…LLLVDAYSDL (61 aa). Residues 38–57 constitute a DNA-binding region (H-T-H motif); that stretch reads SLRAIARNLGMVSSAVYRYV.

In terms of assembly, homodimer.

The protein resides in the cytoplasm. Its function is as follows. May participate in the regulatory network that controls the expression of MmpL lipid transporters. The protein is HTH-type transcriptional regulator MT1864 of Mycobacterium tuberculosis (strain CDC 1551 / Oshkosh).